We begin with the raw amino-acid sequence, 598 residues long: Probable pectinesterase/pectinesterase inhibitor 34 (598 aa).

Residues 1-40 (MGYERLGPSGATGSVTTSTTTAPILNQVSTSEQPENNNRR) are disordered. Residues 7 to 23 (GPSGATGSVTTSTTTAP) are compositionally biased toward low complexity. Polar residues predominate over residues 24–36 (ILNQVSTSEQPEN). Residues 46-66 (VVSSIVLAISLILAAAIFAGV) form a helical membrane-spanning segment. Positions 81–232 (RKPSQAISKA…SELVSNCLAI (152 aa)) are pectinesterase inhibitor 34. The interval 284–582 (DIIVSKDGNG…FTVAEFIYGS (299 aa)) is pectinesterase 34. Thr360 and Gln390 together coordinate substrate. Catalysis depends on Asp413, which acts as the Proton donor; for pectinesterase activity. Cys427 and Cys447 are disulfide-bonded. Catalysis depends on Asp434, which acts as the Nucleophile; for pectinesterase activity. Substrate is bound by residues Arg502 and Trp504.

This sequence in the N-terminal section; belongs to the PMEI family. The protein in the C-terminal section; belongs to the pectinesterase family. As to expression, expressed in siliques.

The protein resides in the membrane. It catalyses the reaction [(1-&gt;4)-alpha-D-galacturonosyl methyl ester](n) + n H2O = [(1-&gt;4)-alpha-D-galacturonosyl](n) + n methanol + n H(+). The protein operates within glycan metabolism; pectin degradation; 2-dehydro-3-deoxy-D-gluconate from pectin: step 1/5. In terms of biological role, acts in the modification of cell walls via demethylesterification of cell wall pectin. The protein is Probable pectinesterase/pectinesterase inhibitor 34 (PME34) of Arabidopsis thaliana (Mouse-ear cress).